The following is a 251-amino-acid chain: MLLIPAIDLKDGQCVRLKQGDMDQATIFSEDPAAMARKWVDLGARRLHLVDLNGAFAGKPKNLEAIEAILDEVGDEIPVQLGGGIRSLETIEKYLDAGLSYVIIGTAAVKNPGFLQDACTAFSGSIIVGLDAKDGKVATDGWSKLTGHEVIDLAKKFEDYGVESIVYTDIGRDGMLQGINIDATVKLAQAVGIPVIASGGLSNLTDIESLCEVEEHGVEGVICGRAIYSGDLDFAAAQKRADELNGELDNA.

Residue Asp-8 is the Proton acceptor of the active site. The active-site Proton donor is Asp-131.

This sequence belongs to the HisA/HisF family.

The protein localises to the cytoplasm. It catalyses the reaction 1-(5-phospho-beta-D-ribosyl)-5-[(5-phospho-beta-D-ribosylamino)methylideneamino]imidazole-4-carboxamide = 5-[(5-phospho-1-deoxy-D-ribulos-1-ylimino)methylamino]-1-(5-phospho-beta-D-ribosyl)imidazole-4-carboxamide. Its pathway is amino-acid biosynthesis; L-histidine biosynthesis; L-histidine from 5-phospho-alpha-D-ribose 1-diphosphate: step 4/9. The chain is 1-(5-phosphoribosyl)-5-[(5-phosphoribosylamino)methylideneamino] imidazole-4-carboxamide isomerase from Burkholderia cenocepacia (strain ATCC BAA-245 / DSM 16553 / LMG 16656 / NCTC 13227 / J2315 / CF5610) (Burkholderia cepacia (strain J2315)).